We begin with the raw amino-acid sequence, 406 residues long: Cysteine desulfurase (406 aa).

An N6-(pyridoxal phosphate)lysine modification is found at Lys226. Cys364 (cysteine persulfide intermediate) is an active-site residue.

This sequence belongs to the class-V pyridoxal-phosphate-dependent aminotransferase family. Csd subfamily. As to quaternary structure, homodimer. Interacts with SufE and the SufBCD complex composed of SufB, SufC and SufD. The interaction with SufE is required to mediate the direct transfer of the sulfur atom from the S-sulfanylcysteine. Pyridoxal 5'-phosphate serves as cofactor.

It is found in the cytoplasm. The catalysed reaction is (sulfur carrier)-H + L-cysteine = (sulfur carrier)-SH + L-alanine. The enzyme catalyses L-selenocysteine + AH2 = hydrogenselenide + L-alanine + A + H(+). The protein operates within cofactor biosynthesis; iron-sulfur cluster biosynthesis. In terms of biological role, cysteine desulfurases mobilize the sulfur from L-cysteine to yield L-alanine, an essential step in sulfur metabolism for biosynthesis of a variety of sulfur-containing biomolecules. Component of the suf operon, which is activated and required under specific conditions such as oxidative stress and iron limitation. Acts as a potent selenocysteine lyase in vitro, that mobilizes selenium from L-selenocysteine. Selenocysteine lyase activity is however unsure in vivo. The sequence is that of Cysteine desulfurase from Escherichia coli O17:K52:H18 (strain UMN026 / ExPEC).